We begin with the raw amino-acid sequence, 829 residues long: FAST kinase domain-containing protein 1, mitochondrial (829 aa).

N6-acetyllysine is present on lysine 346. The region spanning 761-821 is the RAP domain; sequence IAIELLDVRA…KDARMDYLRE (61 aa).

Belongs to the FAST kinase family. As to expression, expression detected in spleen, testis, colon, heart, smooth muscle, kidney, brain, lung, liver, brown and white adipose tissue with highest expression in heart and brown adipose tissue.

It is found in the mitochondrion. In terms of biological role, involved in the down-regulation of mitochondrial MT-ND3 mRNA levels which leads to decreased respiratory complex I abundance and activity. The sequence is that of FAST kinase domain-containing protein 1, mitochondrial (Fastkd1) from Mus musculus (Mouse).